The chain runs to 88 residues: Small ribosomal subunit protein bS20 (88 aa).

The disordered stretch occupies residues methionine 1–histidine 20.

Belongs to the bacterial ribosomal protein bS20 family.

Functionally, binds directly to 16S ribosomal RNA. The chain is Small ribosomal subunit protein bS20 from Bacillus velezensis (strain DSM 23117 / BGSC 10A6 / LMG 26770 / FZB42) (Bacillus amyloliquefaciens subsp. plantarum).